A 166-amino-acid polypeptide reads, in one-letter code: Phosphopantetheine adenylyltransferase (166 aa).

Position 8 (S8) interacts with substrate. ATP contacts are provided by residues 8–9 (SF) and H16. K40, T72, and R86 together coordinate substrate. ATP is bound by residues 87-89 (GLR), E97, and 122-128 (HSFLSSS).

Belongs to the bacterial CoaD family. In terms of assembly, homohexamer. The cofactor is Mg(2+).

The protein localises to the cytoplasm. It catalyses the reaction (R)-4'-phosphopantetheine + ATP + H(+) = 3'-dephospho-CoA + diphosphate. Its pathway is cofactor biosynthesis; coenzyme A biosynthesis; CoA from (R)-pantothenate: step 4/5. Reversibly transfers an adenylyl group from ATP to 4'-phosphopantetheine, yielding dephospho-CoA (dPCoA) and pyrophosphate. This chain is Phosphopantetheine adenylyltransferase, found in Synechococcus sp. (strain RCC307).